A 334-amino-acid chain; its full sequence is L-lactate dehydrogenase B chain (334 aa).

Residue G30 to K58 participates in NAD(+) binding. Substrate-binding residues include R107, N139, and R170. N139 is a binding site for NAD(+). Catalysis depends on H194, which acts as the Proton acceptor. T249 serves as a coordination point for substrate.

The protein belongs to the LDH/MDH superfamily. LDH family. Homotetramer.

Its subcellular location is the cytoplasm. The catalysed reaction is (S)-lactate + NAD(+) = pyruvate + NADH + H(+). The protein operates within fermentation; pyruvate fermentation to lactate; (S)-lactate from pyruvate: step 1/1. Interconverts simultaneously and stereospecifically pyruvate and lactate with concomitant interconversion of NADH and NAD(+). This chain is L-lactate dehydrogenase B chain (ldhb), found in Xenopus laevis (African clawed frog).